The primary structure comprises 968 residues: RNA polymerase-associated protein RapA (968 aa).

The 171-residue stretch at 164–334 (DVGRRHAPRV…FARLRLLDPN (171 aa)) folds into the Helicase ATP-binding domain. 177–184 (DEVGLGKT) lines the ATP pocket. Residues 280–283 (DEAH) carry the DEAH box motif. Residues 490-644 (RVEWLMGYLT…TCPTGRAIYD (155 aa)) form the Helicase C-terminal domain.

It belongs to the SNF2/RAD54 helicase family. RapA subfamily. Interacts with the RNAP. Has a higher affinity for the core RNAP than for the holoenzyme. Its ATPase activity is stimulated by binding to RNAP.

Functionally, transcription regulator that activates transcription by stimulating RNA polymerase (RNAP) recycling in case of stress conditions such as supercoiled DNA or high salt concentrations. Probably acts by releasing the RNAP, when it is trapped or immobilized on tightly supercoiled DNA. Does not activate transcription on linear DNA. Probably not involved in DNA repair. This Salmonella arizonae (strain ATCC BAA-731 / CDC346-86 / RSK2980) protein is RNA polymerase-associated protein RapA.